Here is a 453-residue protein sequence, read N- to C-terminus: Plasticin (453 aa).

Positions 1–51 are head; it reads MSHSTFSHLFSPHFGAPVYSPVSSRIGGRYVSSSVPTRSVDFRSRSSAPAP. The tract at residues 71 to 112 is coil 1A; it reads FATRSNEKRELQELNDRFASFIEKVRHLEQQNSKLILELGQY. The IF rod domain occupies 77 to 390; sequence EKRELQELND…KLLEGEENRI (314 aa). The tract at residues 113–126 is linker 1; the sequence is KDQHQGSTGRINEL. The interval 127–222 is coil 1B; that stretch reads CQQEMRELRR…KMHDEEIQDV (96 aa). The segment at 223–245 is linker 12; it reads QVSVQSQQMKMEVMETSSRPDLT. Positions 246–391 are coil 2; sequence GALRDIRAQY…LLEGEENRIV (146 aa). The interval 392 to 453 is tail; the sequence is VPIMKMPSMS…KKDSHGQGKD (62 aa). The interval 421 to 453 is disordered; that stretch reads IKTVETRDGEVVKESTKEKGRDEKKDSHGQGKD. The span at 424-453 shows a compositional bias: basic and acidic residues; sequence VETRDGEVVKESTKEKGRDEKKDSHGQGKD.

It belongs to the intermediate filament family. As to expression, optic nerve.

Functionally, type III neurofilament. This is Plasticin from Carassius auratus (Goldfish).